Reading from the N-terminus, the 310-residue chain is Ribosomal protein uL3 glutamine methyltransferase (310 aa).

The protein belongs to the protein N5-glutamine methyltransferase family. PrmB subfamily.

The catalysed reaction is L-glutaminyl-[ribosomal protein uL3] + S-adenosyl-L-methionine = N(5)-methyl-L-glutaminyl-[ribosomal protein uL3] + S-adenosyl-L-homocysteine + H(+). Functionally, specifically methylates large ribosomal subunit protein uL3 on 'Gln-150'. This Salmonella typhi protein is Ribosomal protein uL3 glutamine methyltransferase.